We begin with the raw amino-acid sequence, 330 residues long: 4-hydroxythreonine-4-phosphate dehydrogenase (330 aa).

Positions 136 and 137 each coordinate substrate. Positions 166, 211, and 266 each coordinate a divalent metal cation. 3 residues coordinate substrate: lysine 274, asparagine 283, and arginine 292.

This sequence belongs to the PdxA family. As to quaternary structure, homodimer. Requires Zn(2+) as cofactor. The cofactor is Mg(2+). It depends on Co(2+) as a cofactor.

It is found in the cytoplasm. It catalyses the reaction 4-(phosphooxy)-L-threonine + NAD(+) = 3-amino-2-oxopropyl phosphate + CO2 + NADH. Its pathway is cofactor biosynthesis; pyridoxine 5'-phosphate biosynthesis; pyridoxine 5'-phosphate from D-erythrose 4-phosphate: step 4/5. Its function is as follows. Catalyzes the NAD(P)-dependent oxidation of 4-(phosphooxy)-L-threonine (HTP) into 2-amino-3-oxo-4-(phosphooxy)butyric acid which spontaneously decarboxylates to form 3-amino-2-oxopropyl phosphate (AHAP). The polypeptide is 4-hydroxythreonine-4-phosphate dehydrogenase (Erwinia tasmaniensis (strain DSM 17950 / CFBP 7177 / CIP 109463 / NCPPB 4357 / Et1/99)).